Reading from the N-terminus, the 111-residue chain is BET1-like protein (111 aa).

Residues 1-86 are Cytoplasmic-facing; it reads MADWARAQSP…MARSGRDNRK (86 aa). 2 positions are modified to phosphoserine: Ser9 and Ser37. In terms of domain architecture, t-SNARE coiled-coil homology spans 15–77; the sequence is EILDRENKRM…TGSVKRFSTM (63 aa). Residues 87-107 traverse the membrane as a helical; Anchor for type IV membrane protein segment; that stretch reads LLCGMAVGLIVAFFILSYFLS. Over 108 to 111 the chain is Lumenal; sequence RART.

As to quaternary structure, component of a SNARE complex consisting of STX5, YKT6, GOSR1 and BET1L. Interacts with STX5.

The protein resides in the golgi apparatus membrane. It localises to the golgi apparatus. It is found in the trans-Golgi network membrane. In terms of biological role, vesicle SNARE required for targeting and fusion of retrograde transport vesicles with the Golgi complex. Required for the integrity of the Golgi complex. The chain is BET1-like protein from Pongo abelii (Sumatran orangutan).